A 156-amino-acid chain; its full sequence is MSRRHSAEKREVLPDPKFKDIIVTKFMNQIMRDGKKSVAERIVYGAFDLVETRAKKNPVEVFHNALEAVAPAVEVRSRRVGGATYQVPVEVRTERRQALAIRWLAAAAAGRNENTMRERLAGELMDASQGRGNAVKKREDTHRMADANKAFAHYRW.

It belongs to the universal ribosomal protein uS7 family. In terms of assembly, part of the 30S ribosomal subunit. Contacts proteins S9 and S11.

One of the primary rRNA binding proteins, it binds directly to 16S rRNA where it nucleates assembly of the head domain of the 30S subunit. Is located at the subunit interface close to the decoding center, probably blocks exit of the E-site tRNA. The sequence is that of Small ribosomal subunit protein uS7 from Hyphomonas neptunium (strain ATCC 15444).